The primary structure comprises 33 residues: Photosystem II reaction center protein Psb30 (33 aa).

Residues 5-25 (VVAQLTVLALIVVSGPLVIGL) traverse the membrane as a helical segment.

This sequence belongs to the Psb30/Ycf12 family. PSII is composed of 1 copy each of membrane proteins PsbA, PsbB, PsbC, PsbD, PsbE, PsbF, PsbH, PsbI, PsbJ, PsbK, PsbL, PsbM, PsbT, PsbX, PsbY, PsbZ, Psb30/Ycf12, peripheral proteins of the oxygen-evolving complex and a large number of cofactors. It forms dimeric complexes.

It is found in the plastid. The protein localises to the chloroplast thylakoid membrane. A core subunit of photosystem II (PSII), probably helps stabilize the reaction center. The chain is Photosystem II reaction center protein Psb30 from Zygnema circumcarinatum (Green alga).